The sequence spans 162 residues: Cyanate hydratase (162 aa).

Active-site residues include Arg-103, Glu-106, and Ser-129.

This sequence belongs to the cyanase family.

It catalyses the reaction cyanate + hydrogencarbonate + 3 H(+) = NH4(+) + 2 CO2. Catalyzes the reaction of cyanate with bicarbonate to produce ammonia and carbon dioxide. The chain is Cyanate hydratase from Phaeosphaeria nodorum (strain SN15 / ATCC MYA-4574 / FGSC 10173) (Glume blotch fungus).